The sequence spans 292 residues: 33 kDa chaperonin (292 aa).

2 cysteine pairs are disulfide-bonded: Cys-230–Cys-232 and Cys-263–Cys-266.

Belongs to the HSP33 family. Under oxidizing conditions two disulfide bonds are formed involving the reactive cysteines. Under reducing conditions zinc is bound to the reactive cysteines and the protein is inactive.

The protein resides in the cytoplasm. Its function is as follows. Redox regulated molecular chaperone. Protects both thermally unfolding and oxidatively damaged proteins from irreversible aggregation. Plays an important role in the bacterial defense system toward oxidative stress. In Sodalis glossinidius (strain morsitans), this protein is 33 kDa chaperonin.